Reading from the N-terminus, the 698-residue chain is Polyribonucleotide nucleotidyltransferase (698 aa).

Mg(2+)-binding residues include Asp-490 and Asp-496. In terms of domain architecture, KH spans 557 to 616 (PKVVTMTIKPDKIRDVIGPGGKKINEIIDETGVKLDIEQDGTIFIGAVDQAMINRAREII). In terms of domain architecture, S1 motif spans 626–694 (GQTYQATVKR…KQGRVNASHR (69 aa)).

It belongs to the polyribonucleotide nucleotidyltransferase family. The cofactor is Mg(2+).

The protein localises to the cytoplasm. It catalyses the reaction RNA(n+1) + phosphate = RNA(n) + a ribonucleoside 5'-diphosphate. Its function is as follows. Involved in mRNA degradation. Catalyzes the phosphorolysis of single-stranded polyribonucleotides processively in the 3'- to 5'-direction. The polypeptide is Polyribonucleotide nucleotidyltransferase (Staphylococcus aureus (strain bovine RF122 / ET3-1)).